Here is a 518-residue protein sequence, read N- to C-terminus: Pre-glycoprotein polyprotein GP complex (518 aa).

Gly-2 carries the N-myristoyl glycine; by host lipid modification. Residues 2–17 (GQVIGFFQSLPNIINE) lie on the Extracellular side of the membrane. The helical transmembrane segment at 18 to 33 (ALNIALICVALIAILK) threads the bilayer. The Cytoplasmic portion of the chain corresponds to 34–58 (GIVNIWKSGLIQLFIFLILAGRSCS). Cys-57 lines the Zn(2+) pocket. The Extracellular portion of the chain corresponds to 59 to 456 (HTFQIGRNHE…QGSTPLSLVD (398 aa)). Intrachain disulfides connect Cys-87–Cys-258, Cys-303–Cys-316, Cys-325–Cys-334, and Cys-388–Cys-409. Asn-90, Asn-112, Asn-127, Asn-180, and Asn-251 each carry an N-linked (GlcNAc...) asparagine; by host glycan. Residues Asn-389, Asn-397, Asn-414, and Asn-419 are each glycosylated (N-linked (GlcNAc...) asparagine; by host). A helical transmembrane segment spans residues 457–477 (LCFWSTLFYVTTLFAHLVGFP). The Cytoplasmic portion of the chain corresponds to 478 to 518 (THRHILDGPCPKPHRLTKKGICSCGHFGIPGKPVRWVKRSR). Residues His-479, His-481, Cys-487, His-491, Cys-499, and Cys-501 each coordinate Zn(2+).

Belongs to the arenaviridae GPC protein family. In terms of assembly, interacts with glycoprotein G2. Part of the GP complex (GP-C) together with glycoprotein G1 and glycoprotein G2. The GP-complex interacts with protein Z, which interacts with ribonucleocapsid; these interactions may induce virion budding. As to quaternary structure, homotrimer; disulfide-linked. In pre-fusion state, G1 homotrimers bind G2 homotrimers via ionic interactions. Part of the GP complex (GP-C) together with glycoprotein G2 and the stable signal peptide. The GP-complex interacts with protein Z, which interacts with ribonucleocapsid; these interactions may induce virion budding. Homotrimer. Interacts with the stable signal peptide. In pre-fusion state, G2 homotrimers bind G1 homotrimers via ionic interactions. Part of the GP complex (GP-C) together with glycoprotein G1 and the stable signal peptide. Acidification in the endosome triggers rearrangements, which ultimately leads to a 6 helix bundle formed by the two heptad repeat domains (HR1 and HR2) in post-fusion state. The GP-complex interacts with protein Z, which interacts with ribonucleocapsid; these interactions may induce virion budding. Specific enzymatic cleavages in vivo yield mature proteins. GP-C polyprotein is cleaved in the endoplasmic reticulum by the host protease MBTPS1. Only cleaved glycoprotein is incorporated into virions. Post-translationally, the SSP remains stably associated with the GP complex following cleavage by signal peptidase and plays crucial roles in the trafficking of GP through the secretory pathway. In terms of processing, myristoylation is necessary for GP2-mediated fusion activity.

The protein localises to the virion membrane. It localises to the host endoplasmic reticulum membrane. It is found in the host Golgi apparatus membrane. The protein resides in the host cell membrane. Functionally, functions as a cleaved signal peptide that is retained as the third component of the GP complex (GP-C). Helps to stabilize the spike complex in its native conformation. The SSP is required for efficient glycoprotein expression, post-translational maturation cleavage of G1 and G2, glycoprotein transport to the cell surface plasma membrane, formation of infectious virus particles, and acid pH-dependent glycoprotein-mediated cell fusion. Its function is as follows. Forms the virion spikes together with glycoprotein G2. The glycoprotein spike trimers are connected to the underlying matrix. Mediates virus attachment to host receptor alpha-dystroglycan DAG1. This attachment induces virion internalization predominantly through clathrin- and caveolin-independent endocytosis. In terms of biological role, forms the virion spikes together with glycoprotein G1. The glycoprotein spike trimers are connected to the underlying matrix. Class I viral fusion protein that directs fusion of viral and host endosomal membranes, leading to delivery of the nucleocapsid into the cytoplasm. Membrane fusion is mediated by irreversible conformational changes induced by acidification. This is Pre-glycoprotein polyprotein GP complex from Bolomys (OLVV).